A 190-amino-acid chain; its full sequence is dTTP/UTP pyrophosphatase (190 aa).

D71 (proton acceptor) is an active-site residue.

Belongs to the Maf family. YhdE subfamily. It depends on a divalent metal cation as a cofactor.

The protein resides in the cytoplasm. It catalyses the reaction dTTP + H2O = dTMP + diphosphate + H(+). The enzyme catalyses UTP + H2O = UMP + diphosphate + H(+). Functionally, nucleoside triphosphate pyrophosphatase that hydrolyzes dTTP and UTP. May have a dual role in cell division arrest and in preventing the incorporation of modified nucleotides into cellular nucleic acids. This chain is dTTP/UTP pyrophosphatase, found in Xanthomonas oryzae pv. oryzae (strain MAFF 311018).